Consider the following 245-residue polypeptide: Tryptophan synthase alpha chain (245 aa).

Residues E35 and D46 each act as proton acceptor in the active site.

It belongs to the TrpA family. Tetramer of two alpha and two beta chains.

The catalysed reaction is (1S,2R)-1-C-(indol-3-yl)glycerol 3-phosphate + L-serine = D-glyceraldehyde 3-phosphate + L-tryptophan + H2O. The protein operates within amino-acid biosynthesis; L-tryptophan biosynthesis; L-tryptophan from chorismate: step 5/5. The alpha subunit is responsible for the aldol cleavage of indoleglycerol phosphate to indole and glyceraldehyde 3-phosphate. This chain is Tryptophan synthase alpha chain, found in Sulfurisphaera tokodaii (strain DSM 16993 / JCM 10545 / NBRC 100140 / 7) (Sulfolobus tokodaii).